We begin with the raw amino-acid sequence, 519 residues long: ATP synthase subunit beta, mitochondrial (519 aa).

The N-terminal 21 residues, M1–A21, are a transit peptide targeting the mitochondrion. ATP is bound by residues G184–V191 and R216.

The protein belongs to the ATPase alpha/beta chains family. In terms of assembly, F-type ATPases have 2 components, F(1) - the catalytic core - and F(o) - the membrane proton channel. F(1) has five subunits: alpha(3), beta(3), gamma(1), delta(1), epsilon(1), plus the additional subunit P18 (Tb427.05.1710) that is not present in F(1)F(o) ATP synthase from metazoa. Subunit P18 (Tb927.5.1710) interacts with the alpha subunit with a 1:1 stoichiometry; the interaction is direct. Subunit gamma is part of the central stalk. F(o) has three main subunits: a, b and c. The trypanosomal ATPase complex contains additional subunits that are not present in the F(1)F(o) ATP synthase from metazoa.

The protein resides in the mitochondrion. It localises to the mitochondrion inner membrane. It catalyses the reaction ATP + H2O + 4 H(+)(in) = ADP + phosphate + 5 H(+)(out). In terms of biological role, mitochondrial membrane ATP synthase (F(1)F(o) ATP synthase) produces ATP from ADP in the presence of a proton gradient across the membrane which is generated by electron transport complexes of the respiratory chain. F-type ATPases consist of two structural domains, F(1) - containing the extramembraneous catalytic core, and F(o) - containing the membrane proton channel, linked together by a central stalk and a peripheral stalk. During catalysis, ATP synthesis in the catalytic domain of F(1) is coupled via a rotary mechanism of the central stalk subunits to proton translocation. Subunits alpha and beta form the catalytic core in F(1). Rotation of the central stalk against the surrounding alpha(3)beta(3) subunits leads to hydrolysis of ATP in three separate catalytic sites on the beta subunits. Contrary to the procyclic, insect form that requires F(1)F(o) ATP synthase for ATP synthesis, the bloodstream form relies on ATP hydrolysis by F(1)F(o) ATP synthase to maintain its mitochondrial membrane potential. This chain is ATP synthase subunit beta, mitochondrial, found in Trypanosoma brucei brucei.